We begin with the raw amino-acid sequence, 347 residues long: Quinolinate synthase (347 aa).

Iminosuccinate contacts are provided by His47 and Ser68. Cys113 is a [4Fe-4S] cluster binding site. Iminosuccinate contacts are provided by residues 139 to 141 and Ser156; that span reads YAN. Residue Cys200 coordinates [4Fe-4S] cluster. Iminosuccinate-binding positions include 226-228 and Thr243; that span reads HPE. Residue Cys297 participates in [4Fe-4S] cluster binding.

Belongs to the quinolinate synthase family. Type 1 subfamily. [4Fe-4S] cluster is required as a cofactor.

The protein resides in the cytoplasm. The catalysed reaction is iminosuccinate + dihydroxyacetone phosphate = quinolinate + phosphate + 2 H2O + H(+). It functions in the pathway cofactor biosynthesis; NAD(+) biosynthesis; quinolinate from iminoaspartate: step 1/1. Catalyzes the condensation of iminoaspartate with dihydroxyacetone phosphate to form quinolinate. This Salmonella typhi protein is Quinolinate synthase.